The following is a 239-amino-acid chain: MSIEWLSEKLSEQGIELSNTQKEQFQKYYKLLVEWNKKMNLTSITDEHDVYLKHFYDSIAPSFYYDFNGQLSLCDIGAGAGFPSIPLKIVYPELKVTIVDSLNKRIQFLNHLAAELGLEDVSFVHDRAETYGKGVYRESYDIVTARAVARLTVLSELCLPLVNKGGQFLALKSSKGKEELQEATFAINILGGNVKETYTFELPENAGERQMIIIDKRRQTSKKYPRKPGTPNKSPLVES.

S-adenosyl-L-methionine contacts are provided by residues glycine 77, phenylalanine 82, 128–129 (AE), and arginine 146. Residues 217–239 (RRQTSKKYPRKPGTPNKSPLVES) are disordered.

It belongs to the methyltransferase superfamily. RNA methyltransferase RsmG family.

The protein resides in the cytoplasm. In terms of biological role, specifically methylates the N7 position of guanine in position 535 of 16S rRNA. The sequence is that of Ribosomal RNA small subunit methyltransferase G from Staphylococcus epidermidis (strain ATCC 12228 / FDA PCI 1200).